Here is a 465-residue protein sequence, read N- to C-terminus: Indoleacetamide hydrolase (465 aa).

The interval Met-1 to Arg-40 is disordered. The segment covering Arg-9–Cys-39 has biased composition (basic and acidic residues). Ser-149 (charge relay system) is an active-site residue. Catalysis depends on Ser-173, which acts as the Acyl-ester intermediate.

Belongs to the amidase family.

The protein operates within plant hormone metabolism; auxin biosynthesis. Hydrolyzes indole-3-acetamide (IAM) into indole-3-acetic acid (IAA). This Bradyrhizobium japonicum protein is Indoleacetamide hydrolase (bam).